Reading from the N-terminus, the 170-residue chain is TFIIB-type zinc finger protein (170 aa).

The segment at 1–30 (MECPVCGSNEIVWDNKNGEVVCSNCGIIID) adopts a TFIIB-type zinc-finger fold. Zn(2+)-binding residues include C3, C6, C22, and C25.

Belongs to the TFIIB family. It depends on Zn(2+) as a cofactor.

This Saccharolobus shibatae (strain ATCC 51178 / DSM 5389 / JCM 8931 / NBRC 15437 / B12) (Sulfolobus shibatae) protein is TFIIB-type zinc finger protein.